Here is a 493-residue protein sequence, read N- to C-terminus: Inosine-5'-monophosphate dehydrogenase (493 aa).

CBS domains follow at residues 97–155 (VIID…NAPI) and 159–219 (MTSE…AKDE). NAD(+)-binding positions include Asp-253 and 303–305 (GIG). Residues Gly-305 and Gly-307 each coordinate K(+). Ser-308 is a binding site for IMP. Cys-310 lines the K(+) pocket. Cys-310 (thioimidate intermediate) is an active-site residue. IMP contacts are provided by residues 343-345 (DGG), 366-367 (GS), and 390-394 (YRGMG). Catalysis depends on Arg-406, which acts as the Proton acceptor. Glu-421 serves as a coordination point for IMP. K(+)-binding residues include Glu-475, Ser-476, and His-477.

This sequence belongs to the IMPDH/GMPR family. As to quaternary structure, homotetramer. The cofactor is K(+).

The catalysed reaction is IMP + NAD(+) + H2O = XMP + NADH + H(+). Its pathway is purine metabolism; XMP biosynthesis via de novo pathway; XMP from IMP: step 1/1. Its activity is regulated as follows. Mycophenolic acid (MPA) is a non-competitive inhibitor that prevents formation of the closed enzyme conformation by binding to the same site as the amobile flap. In contrast, mizoribine monophosphate (MZP) is a competitive inhibitor that induces the closed conformation. MPA is a potent inhibitor of mammalian IMPDHs but a poor inhibitor of the bacterial enzymes. MZP is a more potent inhibitor of bacterial IMPDH. In terms of biological role, catalyzes the conversion of inosine 5'-phosphate (IMP) to xanthosine 5'-phosphate (XMP), the first committed and rate-limiting step in the de novo synthesis of guanine nucleotides, and therefore plays an important role in the regulation of cell growth. This chain is Inosine-5'-monophosphate dehydrogenase, found in Streptococcus pyogenes serotype M1.